A 392-amino-acid polypeptide reads, in one-letter code: Riboflavin biosynthesis protein PYRD, chloroplastic (392 aa).

The N-terminal 26 residues, 1–26, are a transit peptide targeting the chloroplast; sequence MASSLVSRPHLTQRPVRAATLASATR. Residues 46-168 form the CMP/dCMP-type deaminase domain; that stretch reads LDDAHYMRRC…KLQGAGISVR (123 aa). H95 is a Zn(2+) binding site. The Proton donor role is filled by E97. The Zn(2+) site is built by C120 and C129.

Zn(2+) is required as a cofactor.

The protein localises to the plastid. It localises to the chloroplast. It catalyses the reaction 2,5-diamino-6-hydroxy-4-(5-phosphoribosylamino)-pyrimidine + H2O + H(+) = 5-amino-6-(5-phospho-D-ribosylamino)uracil + NH4(+). It participates in cofactor biosynthesis; riboflavin biosynthesis; 5-amino-6-(D-ribitylamino)uracil from GTP: step 2/4. Its function is as follows. Monofunctional pyrimidine deaminase involved in the riboflavin biosynthesis pathway. Also has a reductase domain that lacks catalytically essential substrate-binding residues. The polypeptide is Riboflavin biosynthesis protein PYRD, chloroplastic (PYRD) (Zea mays (Maize)).